A 200-amino-acid polypeptide reads, in one-letter code: MTLEITAAMVKDLREKTNVGMMDCKKALQETGGDLEKAVDLLRQKGLAKAMKRAGKEASEGMVHAYIHAGGRIGVLIEVNCETDFAAKSEDFVEFVKNVAMQVAATNPLGIVPEDISQDVVERERAIYLAQAQESGKPQNILEKMVEGKMRKFFEESTLLQQSYVKDPDKTIQDYLNELTASIGEKIIIRRFARFQLGSE.

Residues 83–86 are involved in Mg(2+) ion dislocation from EF-Tu; that stretch reads TDFA.

It belongs to the EF-Ts family.

It is found in the cytoplasm. Functionally, associates with the EF-Tu.GDP complex and induces the exchange of GDP to GTP. It remains bound to the aminoacyl-tRNA.EF-Tu.GTP complex up to the GTP hydrolysis stage on the ribosome. This is Elongation factor Ts from Syntrophobacter fumaroxidans (strain DSM 10017 / MPOB).